A 370-amino-acid chain; its full sequence is Isopentenyl-diphosphate delta-isomerase (370 aa).

8–9 is a substrate binding site; that stretch reads RK. FMN is bound by residues threonine 65, 66–68, serine 99, and asparagine 127; that span reads GMT. 99–101 is a binding site for substrate; the sequence is SQR. Glutamine 166 lines the substrate pocket. Mg(2+) is bound at residue glutamate 167. FMN contacts are provided by residues lysine 198, serine 223, threonine 228, 277–279, and 298–299; these read GMR and AL.

Belongs to the IPP isomerase type 2 family. As to quaternary structure, homooctamer. Dimer of tetramers. FMN is required as a cofactor. The cofactor is NADPH. It depends on Mg(2+) as a cofactor.

The protein resides in the cytoplasm. It carries out the reaction isopentenyl diphosphate = dimethylallyl diphosphate. Its function is as follows. Involved in the biosynthesis of isoprenoids. Catalyzes the 1,3-allylic rearrangement of the homoallylic substrate isopentenyl (IPP) to its allylic isomer, dimethylallyl diphosphate (DMAPP). The polypeptide is Isopentenyl-diphosphate delta-isomerase (Pyrococcus abyssi (strain GE5 / Orsay)).